A 428-amino-acid polypeptide reads, in one-letter code: Cholecystokinin receptor type A (428 aa).

The Extracellular portion of the chain corresponds to 1–41 (MEVADSLLGNGSDVPPPCELGLENETLVCLEQPRAAKEWQP). N-linked (GlcNAc...) asparagine glycans are attached at residues asparagine 10 and asparagine 24. Cysteine 18 and cysteine 29 are oxidised to a cystine. Residues 42–67 (AVQILLYSLIFLLSVLGNTLVITVLI) form a helical membrane-spanning segment. Residues 68 to 77 (RNKRMRTVTN) are Cytoplasmic-facing. Residues 78–104 (IFLLSLAVSDLMLCLFCMPFNLIPNLL) form a helical membrane-spanning segment. Over 105–115 (KDFIFGSAVCK) the chain is Extracellular. Cysteines 114 and 196 form a disulfide. The helical transmembrane segment at 116–137 (TTTYFMGTSVSVSTFNLVAISL) threads the bilayer. Over 138–157 (ERYGAICKPLQSRVWQTKSH) the chain is Cytoplasmic. Residues 158-178 (ALKVIATTWCLSFTIMTPYPI) form a helical membrane-spanning segment. Over 179-210 (YSNLVPFTKTNNQTANMCRFLLPNDVMQQSWH) the chain is Extracellular. A glycan (N-linked (GlcNAc...) asparagine) is linked at asparagine 190. A helical membrane pass occupies residues 211–234 (TFLLLILFLIPGIVMMVAYGLISL). Residues 235–313 (ELYQGIKFDA…NLMAKKRVIR (79 aa)) lie on the Cytoplasmic side of the membrane. The interval 250–269 (ARDRNPSTGSSGRYEDGDGC) is disordered. Residues 314–334 (MLMVIVVLFFLCWMPIFSANA) form a helical membrane-spanning segment. The Extracellular segment spans residues 335–349 (WRAYDTASAERRLSG). The chain crosses the membrane as a helical span at residues 350–373 (TPISFILLLSYTSSCVNPIIYCFM). Residues 374-428 (NKRFRLGFLATFPCCPHPGPPGPRGEVGEEEEGRTTGASLSRYSYSHMSASAPGP) are Cytoplasmic-facing. A lipid anchor (S-palmitoyl cysteine) is attached at cysteine 387. The interval 393–428 (PPGPRGEVGEEEEGRTTGASLSRYSYSHMSASAPGP) is disordered. Over residues 409 to 422 (TGASLSRYSYSHMS) the composition is skewed to polar residues.

The protein belongs to the G-protein coupled receptor 1 family.

The protein localises to the cell membrane. Functionally, receptor for cholecystokinin. Mediates pancreatic growth and enzyme secretion, smooth muscle contraction of the gall bladder and stomach. Has a 1000-fold higher affinity for CCK rather than for gastrin. It modulates feeding and dopamine-induced behavior in the central and peripheral nervous system. This receptor mediates its action by association with G proteins that activate a phosphatidylinositol-calcium second messenger system. This Canis lupus familiaris (Dog) protein is Cholecystokinin receptor type A (CCKAR).